We begin with the raw amino-acid sequence, 307 residues long: Coproporphyrin III ferrochelatase (307 aa).

Fe-coproporphyrin III contacts are provided by residues Y12, R29, 45-46 (RY), S53, and Y124. Fe(2+) is bound by residues H181 and E263.

Belongs to the ferrochelatase family.

The protein localises to the cytoplasm. It carries out the reaction Fe-coproporphyrin III + 2 H(+) = coproporphyrin III + Fe(2+). The protein operates within porphyrin-containing compound metabolism; protoheme biosynthesis. Functionally, involved in coproporphyrin-dependent heme b biosynthesis. Catalyzes the insertion of ferrous iron into coproporphyrin III to form Fe-coproporphyrin III. It can also insert iron into protoporphyrin IX, but it has a much stronger preference for coproprophyrin III as the substrate. In Staphylococcus aureus (strain NCTC 8325 / PS 47), this protein is Coproporphyrin III ferrochelatase.